A 260-amino-acid chain; its full sequence is Purine nucleoside phosphorylase PD_1754 (260 aa).

The Zn(2+) site is built by histidine 79, cysteine 120, and histidine 137.

This sequence belongs to the purine nucleoside phosphorylase YfiH/LACC1 family. As to quaternary structure, homodimer. Cu(2+) is required as a cofactor. Requires Zn(2+) as cofactor.

It catalyses the reaction adenosine + phosphate = alpha-D-ribose 1-phosphate + adenine. The enzyme catalyses S-methyl-5'-thioadenosine + phosphate = 5-(methylsulfanyl)-alpha-D-ribose 1-phosphate + adenine. It carries out the reaction inosine + phosphate = alpha-D-ribose 1-phosphate + hypoxanthine. The catalysed reaction is adenosine + H2O + H(+) = inosine + NH4(+). Purine nucleoside enzyme that catalyzes the phosphorolysis of adenosine and inosine nucleosides, yielding D-ribose 1-phosphate and the respective free bases, adenine and hypoxanthine. Also catalyzes the phosphorolysis of S-methyl-5'-thioadenosine into adenine and S-methyl-5-thio-alpha-D-ribose 1-phosphate. Also has adenosine deaminase activity. The chain is Purine nucleoside phosphorylase PD_1754 from Xylella fastidiosa (strain Temecula1 / ATCC 700964).